The primary structure comprises 452 residues: GATA-binding factor 2 (452 aa).

A disordered region spans residues 130-182 (GGSLYPGTGSSACPSSSHSSPHLFGFPPTPPKDVSPDPGPASPPSSSRLEDKD). Residues 139–151 (SSACPSSSHSSPH) are compositionally biased toward low complexity. Pro residues predominate over residues 156-172 (PPTPPKDVSPDPGPASP). 2 consecutive GATA-type zinc fingers follow at residues 267–291 (CVNC…CNAC) and 321–345 (CANC…CNAC). The segment covering 426–438 (QTPTPIHPSSSLS) has biased composition (polar residues). The segment at 426–452 (QTPTPIHPSSSLSFGHPHHSSMVTAMG) is disordered.

As to expression, expressed in the developing ventral blood island, and in the embryonic nervous system.

The protein resides in the nucleus. The polypeptide is GATA-binding factor 2 (gata2) (Xenopus laevis (African clawed frog)).